The sequence spans 1552 residues: MIMTANNDMAVRESVVVTEGASSTPELWQMLGSRDQPTNITPRVRITDVDHKQLHSSANLVSARALQQLTKSLHEGICSTALEDDSQSSSAYYSTYASTPRSLSPNLEAVPSDDGIPDLQPQFEAVERASFAQERIWFLHEYLTDPTTFNVTMAYAVQGPLQPAELATAFRAMSDRHESLRTAFFLDSRDGEPQLFQGILPETQIEISIHTIDSTQVVDEVYASVRDHVYDLPRGKTMKVAILTLTPTTHFLVLGFHHIALDGFSAQIFIKDLQLIYSTGQILPPAPRYRDYTLLQRQSLANDTYRESLDFWKSKLANLPPPMPLFAFSRVAARKPLNSYRVHSVERTIGISLASKIKDTAHKVGGTTSFFLYLTALRELVFRLLGHAQRDICLGISDAGRADKEALQVVGMFVNMLPLQFRAARPGQSFRDLLATTTRQVRTALTHAAVPYQVLLDELAVQRSPSENPLFQILLNYKMGSTEEATLGHCRAHSLRMDDARTGLDLVIEVEEFVDGNFQVAVRGQEYLYGEEGLEFILSSLVTILEEVTLRPSMPVANLAIFDEKSITHALELSRGEHVFTAEHLLTVVHLFDRHCKAHPRDVAVKQADGQFLSYGELQGRAQELARRLQELEGSTAVVVACKPSLDTIVSIVGIHYAGCTYVPVDIEHPEERLRTIVEDCKPRAILYHADTQDLAVALAGGAIAVPTPQSGMDKAFPIKASVNDTAYILYTSGSTGKPKGVIVSHGNLTCQILSMRRTATLGKETVLHQSGVAFDASIDCVYAALAGQGTLVMAPPEVRRDPVQLASLMAREQITYTQMTSSEYHNLVVYGAEHLKQCVTYRNAFCGGEKFLSSLIPLFRALELPALRVWNRYGPTEITVSSSMQMIVGADGLNRSTELIPCGRPLTNYSVFILDEQRRPVPAGVPGEICIGGGGVAQGYLNNARLTASKFVKNIYASEDDVRRGWDRLYRTGDRGYLLSDGSLVFLGRMEGSAQVKIRGQRVELDEIETAIVATSEGRVLSAGVCVKGDNADAVLAAYVVLRPDVQVDSLSSLVASLARSLPLPRYMRPSSFVAVGRLPHNTSGKLDRQALSKLSGTPIAIETNNHPAPLGVEEEVMAKAWREVLPGEAVLSAESNFFDVGGNSLLLVRLQKVIEELTGKSVALTELFSTPGMSAMARLLQPQEATRETTEVDWESETQLTPSLLSAIQTSSRCSPSSEVEVILTGATGFLGRTLLQQLLAHPRIAHVHCLAIRNSSVTRASLTSNPDHAAKLTLYHGDLSHPTLSLNEETISSLSNRIGLVIHNGASVSFLKSYSTLRAPNVHSSRFLLQLSIERGIPFHFVSTGGVVNLTGQPTWPPVSVRNYPPPGEQGYIASKWASERLIENAAEALHLRGVHLPVVVHRPASIVARQPGTPGTSQSEPPAMDIMHNMVQYARIMQCFPATEGVNWRFDFVGVDAVASGILASALGEEDESEGVKYVHHCNERKLSPRELKKELEEEAGCVFEEVEVGEWVRRAKECGMDGLVAATLVDLMERQRGVVFTEMGLDC.

Residues 129 to 564 (ASFAQERIWF…PVANLAIFDE (436 aa)) form a condensation region. The segment at 594–999 (RHCKAHPRDV…RMEGSAQVKI (406 aa)) is adenylation. One can recognise a Carrier domain in the interval 1110-1186 (APLGVEEEVM…AMARLLQPQE (77 aa)). Ser-1146 carries the O-(pantetheine 4'-phosphoryl)serine modification. The thiolester reductase (R) domain stretch occupies residues 1226–1464 (LTGATGFLGR…DFVGVDAVAS (239 aa)).

The protein belongs to the NRP synthetase family.

It participates in secondary metabolite biosynthesis. Its function is as follows. Nonribosomal peptide synthetase; part of the cluster that mediates the biosynthesis of acurin A, a highly reduced polyketide coupled to a serine via a peptide bond. The activities of the highly reducing polyketide synthase acrA and the nonribosomal peptide synthetase acrB are collectively responsible for the synthesis of the acurin A core structure with a heptaketide backbone produced by acrA covalently fused to a L-serine by acrB. After the formation of the PK-NRP hybrid product, it is detached from acrB by reductive release to set up the formation of the lactam ring by aldol condensation. The hydrolyase acrC then catalyzes water loss to generate a double bond in the ring. This double bond is probably reduced, which is followed by three oxidations at C-22 to generate the carboxylic acid moiety, involving probably the FAD-binding monooxygenase acrE and the cytochrome P450 monooxygenases acrD and acrF. Finally, a last methylation step performed by the O-methyltransferase acrG leads to the production of acurin A. The protein is Nonribosomal peptide synthetase acrB of Aspergillus aculeatus (strain ATCC 16872 / CBS 172.66 / WB 5094).